We begin with the raw amino-acid sequence, 294 residues long: Diaminopimelate epimerase (294 aa).

Residues Asn-13, Gln-46, and Asn-69 each contribute to the substrate site. The active-site Proton donor is Cys-78. Residues 79–80, Asn-173, Asn-206, and 224–225 contribute to the substrate site; these read GN and ER. Cys-233 functions as the Proton acceptor in the catalytic mechanism. 234–235 is a binding site for substrate; it reads GT.

It belongs to the diaminopimelate epimerase family. Homodimer.

It localises to the cytoplasm. It carries out the reaction (2S,6S)-2,6-diaminopimelate = meso-2,6-diaminopimelate. The protein operates within amino-acid biosynthesis; L-lysine biosynthesis via DAP pathway; DL-2,6-diaminopimelate from LL-2,6-diaminopimelate: step 1/1. Its function is as follows. Catalyzes the stereoinversion of LL-2,6-diaminopimelate (L,L-DAP) to meso-diaminopimelate (meso-DAP), a precursor of L-lysine and an essential component of the bacterial peptidoglycan. In Variovorax paradoxus (strain S110), this protein is Diaminopimelate epimerase.